We begin with the raw amino-acid sequence, 426 residues long: MSVSANAAQAHAQPSAVLRPVMILAGGTGGHIFPGLAVAKVLRARGVPVTWLGADGAMETRLVPQHDIPIDTLAISGLRGKGVVKLLGAPVRVMRAVRAAGFVLRKRQPRAVISFGGFAAGPGGLAARLLGAPLLVHEQNRAPGMTNKVLSRFARRVLTGFPGSFVGEEAVGNPVRAEIAALPAPADRLFGRTGPVRVLVLGGSQGARVLNQALPAALVALGHSEVEVRHQCGEKLRAEAEAAYAQAGVNASVEPFIADMAAAYAWADLVVCRAGASTLAELCAAGVGSVLVPFAAAVDDHQTRNAEYLVGANAAVLLKQDDSLPVRLQQVLQTLLADPARRLSMANAARTLAKPDAAERIADIILQEAGNGPSGMGNGHSSEQPQERTLMHADKRTDQVSVAAGAQLHTIPDSRFPIRTSTGGAR.

UDP-N-acetyl-alpha-D-glucosamine is bound by residues 28–30, Asn-140, Arg-176, Ser-204, Ile-257, and Gln-302; that span reads TGG. The interval 369–388 is disordered; sequence AGNGPSGMGNGHSSEQPQER.

The protein belongs to the glycosyltransferase 28 family. MurG subfamily.

It localises to the cell inner membrane. The enzyme catalyses di-trans,octa-cis-undecaprenyl diphospho-N-acetyl-alpha-D-muramoyl-L-alanyl-D-glutamyl-meso-2,6-diaminopimeloyl-D-alanyl-D-alanine + UDP-N-acetyl-alpha-D-glucosamine = di-trans,octa-cis-undecaprenyl diphospho-[N-acetyl-alpha-D-glucosaminyl-(1-&gt;4)]-N-acetyl-alpha-D-muramoyl-L-alanyl-D-glutamyl-meso-2,6-diaminopimeloyl-D-alanyl-D-alanine + UDP + H(+). The protein operates within cell wall biogenesis; peptidoglycan biosynthesis. Cell wall formation. Catalyzes the transfer of a GlcNAc subunit on undecaprenyl-pyrophosphoryl-MurNAc-pentapeptide (lipid intermediate I) to form undecaprenyl-pyrophosphoryl-MurNAc-(pentapeptide)GlcNAc (lipid intermediate II). The chain is UDP-N-acetylglucosamine--N-acetylmuramyl-(pentapeptide) pyrophosphoryl-undecaprenol N-acetylglucosamine transferase from Xanthomonas axonopodis pv. citri (strain 306).